A 450-amino-acid chain; its full sequence is 3-phosphoshikimate 1-carboxyvinyltransferase (450 aa).

The interval 1–26 (MSAHGDPIPMTAHPSGPLSGTAQVPG) is disordered. K28, S29, and R33 together coordinate 3-phosphoshikimate. K28 serves as a coordination point for phosphoenolpyruvate. 2 residues coordinate phosphoenolpyruvate: G101 and R129. 3-phosphoshikimate contacts are provided by S174, Q176, D327, and K354. Q176 is a phosphoenolpyruvate binding site. The active-site Proton acceptor is the D327. Positions 358 and 403 each coordinate phosphoenolpyruvate.

Belongs to the EPSP synthase family. In terms of assembly, monomer.

The protein resides in the cytoplasm. It carries out the reaction 3-phosphoshikimate + phosphoenolpyruvate = 5-O-(1-carboxyvinyl)-3-phosphoshikimate + phosphate. The protein operates within metabolic intermediate biosynthesis; chorismate biosynthesis; chorismate from D-erythrose 4-phosphate and phosphoenolpyruvate: step 6/7. Functionally, catalyzes the transfer of the enolpyruvyl moiety of phosphoenolpyruvate (PEP) to the 5-hydroxyl of shikimate-3-phosphate (S3P) to produce enolpyruvyl shikimate-3-phosphate and inorganic phosphate. In Dinoroseobacter shibae (strain DSM 16493 / NCIMB 14021 / DFL 12), this protein is 3-phosphoshikimate 1-carboxyvinyltransferase.